Here is a 304-residue protein sequence, read N- to C-terminus: Acetyl-coenzyme A carboxylase carboxyl transferase subunit beta (304 aa).

In terms of domain architecture, CoA carboxyltransferase N-terminal spans 52–304 (EVTKCPSCGV…TIFKVLNDII (253 aa)). Positions 56, 59, 75, and 78 each coordinate Zn(2+). The segment at 56-78 (CPSCGVLSHKSEIRANMKMCSNC) adopts a C4-type zinc-finger fold.

The protein belongs to the AccD/PCCB family. Acetyl-CoA carboxylase is a heterohexamer composed of biotin carboxyl carrier protein (AccB), biotin carboxylase (AccC) and two subunits each of ACCase subunit alpha (AccA) and ACCase subunit beta (AccD). Requires Zn(2+) as cofactor.

It is found in the cytoplasm. The catalysed reaction is N(6)-carboxybiotinyl-L-lysyl-[protein] + acetyl-CoA = N(6)-biotinyl-L-lysyl-[protein] + malonyl-CoA. The protein operates within lipid metabolism; malonyl-CoA biosynthesis; malonyl-CoA from acetyl-CoA: step 1/1. Component of the acetyl coenzyme A carboxylase (ACC) complex. Biotin carboxylase (BC) catalyzes the carboxylation of biotin on its carrier protein (BCCP) and then the CO(2) group is transferred by the transcarboxylase to acetyl-CoA to form malonyl-CoA. In Fusobacterium nucleatum subsp. nucleatum (strain ATCC 25586 / DSM 15643 / BCRC 10681 / CIP 101130 / JCM 8532 / KCTC 2640 / LMG 13131 / VPI 4355), this protein is Acetyl-coenzyme A carboxylase carboxyl transferase subunit beta.